A 241-amino-acid polypeptide reads, in one-letter code: tRNA (guanine-N(7)-)-methyltransferase (241 aa).

Residues G61, E84, R86, N117, A118, and L137 each contribute to the S-adenosyl-L-methionine site. Residue D140 is part of the active site. An alphaC helix region spans residues 141 to 149 (PHFKKTKHK). Positions 215 and 217 each coordinate S-adenosyl-L-methionine. An alpha6 helix region spans residues 215 to 223 (TEEGKKVQR).

Belongs to the class I-like SAM-binding methyltransferase superfamily. TrmB family. Catalytic component of the METTL1-WDR4 complex, composed of mettl1 and wdr4.

The protein resides in the nucleus. It carries out the reaction guanosine(46) in tRNA + S-adenosyl-L-methionine = N(7)-methylguanosine(46) in tRNA + S-adenosyl-L-homocysteine. The enzyme catalyses a guanosine in mRNA + S-adenosyl-L-methionine = an N(7)-methylguanosine in mRNA + S-adenosyl-L-homocysteine. It catalyses the reaction a guanosine in miRNA + S-adenosyl-L-methionine = an N(7)-methylguanosine in miRNA + S-adenosyl-L-homocysteine. Its pathway is tRNA modification; N(7)-methylguanine-tRNA biosynthesis. Functionally, catalytic component of METTL1-WDR4 methyltransferase complex that mediates the formation of N(7)-methylguanine in a subset of RNA species, such as tRNAs, mRNAs and microRNAs (miRNAs). Catalyzes the formation of N(7)-methylguanine at position 46 (m7G46) in a large subset of tRNAs that contain the 5'-RAGGU-3' motif within the variable loop. M7G46 interacts with C13-G22 in the D-loop to stabilize tRNA tertiary structure and protect tRNAs from decay. Also acts as a methyltransferase for a subset of internal N(7)-methylguanine in mRNAs. Internal N(7)-methylguanine methylation of mRNAs in response to stress promotes their relocalization to stress granules, thereby suppressing their translation. Also methylates a specific subset of miRNAs. In Danio rerio (Zebrafish), this protein is tRNA (guanine-N(7)-)-methyltransferase (mettl1).